A 299-amino-acid polypeptide reads, in one-letter code: B-box zinc finger protein 22 (299 aa).

Residues Cys5, Cys8, Cys28, His33, Cys57, Cys60, Cys80, and His85 each contribute to the Zn(2+) site. The segment at 5-47 adopts a B box-type 1; atypical zinc-finger fold; the sequence is CNVCEAAEATVLCCADEAALCWACDEKIHAANKLAGKHQRVPL. The segment at 57-99 adopts a B box-type 2; atypical zinc-finger fold; sequence CDICQEASGFFFCLQDRALLCRKCDVAIHTVNPHVSAHQRFLL. 2 disordered regions span residues 143–181 and 206–299; these read FDHH…GSTT and ENNG…RRRF. Composition is skewed to polar residues over residues 164 to 181, 251 to 260, and 277 to 290; these read VNDQ…GSTT, QIQSPPTASG, and ITSS…SPNQ.

Interacts with HY5. Post-translationally, ubiquitinated by COP1 in vitro. COP1-mediated degradation of BBX22 by the proteasome occurs in the dark and is important for a precise skotomorphogenesis process and optimization of seedling growth under short days conditions.

It localises to the nucleus. Its function is as follows. Acts as a positive regulator of seedling photomorphogenesis and light-regulated inhibition of hypocotyl elongation, independently and in concert with HY5 and BBX21. Acts as a positive regulator of de-etiolation and influences chloroplast biogenesis and function through regulation of genes encoding chloroplast proteins. Acts downstream of COP1 and plays an important role in early and long-term adjustment of the shade avoidance syndrome (SAS) responses in natural environments. Regulates the expression of genes responsive to light hormone signals which may contribute to optimal seedling development. In Arabidopsis thaliana (Mouse-ear cress), this protein is B-box zinc finger protein 22.